A 2137-amino-acid polypeptide reads, in one-letter code: MAYFLPSFFQKRLLRYALSRLELVDTEALDLDSLGIRWGQRSTVELRDIGLRLEKLATLLQLPASSELLSAKVQFLKITVPADIYSSGIICEASGINVHLQLPSEESFGAAKDENPNSRRPSQAGTHDSSSDHILPTPADLAESFLDAEPKEEKEELQAAITSRSQVLHRTSASISDDEEELGLGNEGVSLPSFVAAFLKGVAERLQVKVDNVSIRVDMETKQEGVVKREPENKPDNVTGLLTVREVSVGAVSSATSSSEEEKLSRNRNRPIVISDINMALISEPIVFSNYSRFAPPTSPTTPVQPKSSEPSSRIPSPLPGQASDADSVLAMTRSTILEPSQEHSIQDIEEPGVGRMEGSAYTYDGRFSDADTDDENRSDGYLEGSQQFLDDDKLLDNPAYLDSVIDSQLHDDDLEPPEDLVPQDDQFPPSSETLRSQTPEVHMHRETSPSNIDTEHTAPFSHYGDGSFMDRSPHGSQPYLETDHVATPDVSHSASSPSGSLPSRENSDRQTAPPSESGSVGSSDVANGGELSESKLFSNEEAQSMYMSAISHGSSRSFVPNIPGAWDLPESTVVRDVHAGTQLTDAADAKQDVQDETLISTPKLTAQAASALTEKRSFGEQSECPSEAREPDLTPLSPTLSKLSDVAKRFLRIDRISISIPVGEDRRHTDETVRSADVNSASDSLKDSAMRSGHSSTESELLSSTMYASARLRSDSISSEPSFEGTLPRSPPRQANKADHGPISKSQPGDIAVEISAVDVRFDNAIGWLVVKTGQRVLHAFRDGGNVSSGKPAPESVQTRHSLALTLHNFCIKYVDHIPGQTYALNDYDPHSSSPFGLPHEDIILRATASGLTARYLADKNVTKFGLDVSKFVFGFASDDLISFSESLKMRESTRDVLSPVNGDISLSLTKSSDSASLTITTLPLRLYLNVQRLEEVFGRVGGLSTILELGNSISSVSSGKNMKRDSQRRARGVHFESSPPPENNLQANPQLSWKVNARVGGIVFDVAGETHYLRLKTTAVKVVSRFEGIGVQIDKAKLSGPLPLDDSRDAPAKINLSNIRVEFLYSPKEPDLDRLLAIITPSKDKYDEDDDIMLDTLFRQRRQGSVLRTTVAGAKIVVSRTSDLESLSQLEEELGKLSTVAKYLPEDDRPGILTLTLIRELESQVYLGGPVGNITTHLRNAEAAYISMPSLIAAQLGTIKVVRNGSEELVGEALPASGSQGQNQSQLPILMARYIADEMDPTIKIKSHNLRVEYTIPSIIAFLGLSEDQTTGDVAANMANSLANIAESQHLHRNASEISIGSKGRQASAKPSRLAFALRDCVLGLNPRGTTAKGLVVLTNAKFSAAISDSGCSEAMLDIKKASIMLIDDVKNMGLAENLHRGRSTIPQSDQIQSFIDMGFVPVSSISSAMATVKLMQLDDDGTKSLDVELKDDLLILETCADSTQTLISIINGLQPPTPPSVAVKYRTEVLPIEDMLASFSGDAFAMDPPPEQAEIPEAPTIVEPEDGGPGIEDELEYVSDFYPVKSGPDNLPPNESAVPSESNDLLDSFHSQYYVSSSVSDLEFKEDHFANHSAVGGTAHRWDSTQNTYGLTDDSKIRKSPLRIRVRDAHIIWNLFDGYDWQRTRDTISKAVKDVEKRATERRARAGSRASPGFEEEEESVIGDCLFNSIYIGIPANKDPRELRNDINHNIDDLASETGSYATTTTVTGATARQGQSPSYRGRRLKLSRSKYHKMTFELKGICADFVVFPPGSEETQSSLDVRVNDLEIFDHVPTSTWKKFATYMHEAGERESGASMVHLEMLTVRPVPELAASELVLKATLLPLRLHVDQDALDFICRFFEFRDDSALTPSSPADIPFLQRVEVNAVPVKLDFKPKRVDYAGLRSGRTTEFMNFFVLDGADMVMRHVIIYGVSGFDKLGQTLNDIWMPDIKRNQLPGVLAGLAPIRSLVNVGGGVKDLVVVPMREYRKDGRLVRSIQKGALAFAKTTSNELVKLGAKLAIGTQTVLQGAEEMLTTPTAPTLGSEEDMIDEEEANKISPYADQPVGVVQGLRGAFRGLERDLLLARDAIVAVPGEIVESGSAKAAARAVFKRAPTVILRPAIGVSKAVGQTLLGAGNTLDPSNRRKIEDKYKRH.

6 disordered regions span residues 108 to 137, 296 to 325, 339 to 384, 410 to 531, 612 to 640, and 666 to 749; these read FGAAKDENPNSRRPSQAGTHDSSSDHILPT, PPTSPTTPVQPKSSEPSSRIPSPLPGQASD, EPSQ…GYLE, LHDD…NGGE, ALTEKRSFGEQSECPSEAREPDLTPLSPT, and DRRH…KSQP. 2 stretches are compositionally biased toward polar residues: residues 118–128 and 301–315; these read SRRPSQAGTHD and TTPVQPKSSEPSSRI. Positions 413-423 are enriched in acidic residues; it reads DDLEPPEDLVP. Over residues 429–440 the composition is skewed to polar residues; it reads PPSSETLRSQTP. The segment covering 488–505 has biased composition (low complexity); sequence TPDVSHSASSPSGSLPSR. Polar residues predominate over residues 510-526; that stretch reads RQTAPPSESGSVGSSDV. Basic and acidic residues predominate over residues 666 to 675; it reads DRRHTDETVR. A compositionally biased stretch (low complexity) spans 696 to 706; sequence SSTESELLSST.

The protein belongs to the ATG2 family.

It localises to the preautophagosomal structure membrane. It is found in the endoplasmic reticulum membrane. It carries out the reaction a 1,2-diacyl-sn-glycero-3-phosphocholine(in) = a 1,2-diacyl-sn-glycero-3-phosphocholine(out). The enzyme catalyses a 1,2-diacyl-sn-glycero-3-phospho-L-serine(in) = a 1,2-diacyl-sn-glycero-3-phospho-L-serine(out). It catalyses the reaction a 1,2-diacyl-sn-glycero-3-phosphoethanolamine(in) = a 1,2-diacyl-sn-glycero-3-phosphoethanolamine(out). Its function is as follows. Lipid transfer protein required for autophagosome completion and peroxisome degradation. Tethers the edge of the isolation membrane (IM) to the endoplasmic reticulum (ER) and mediates direct lipid transfer from ER to IM for IM expansion. Atg2 binds to the ER exit site (ERES), which is the membrane source for autophagosome formation, using basic residues in its N-terminal region (NR) and to the expanding edge of the IM through its C-terminal region. The latter binding is assisted by an atg18-PtdIns3P interaction. Atg2 then extracts phospholipids from the membrane source using its NR and transfers them to atg9 to the IM through its predicted beta-sheet-rich structure for membrane expansion. This is Autophagy-related protein 2 (atg2) from Neosartorya fischeri (strain ATCC 1020 / DSM 3700 / CBS 544.65 / FGSC A1164 / JCM 1740 / NRRL 181 / WB 181) (Aspergillus fischerianus).